Consider the following 392-residue polypeptide: MSVIKLVDLDLKNKRVFIRADLNVPVKDGKVTSDARITASMATINHCLKQGAKVMVTSHLGRPEEGVWTEENSLQPVADDIARRLGKPVRLIKDWVEGGFEVASGELVVLENCRINKGEKKNLEETAKKYASLCDVFVMDAFGTAHRAEASTHGIAKYAPIACAGILLTEELDALTKALHQPAHPLVAIVGGSKVSTKLTVLESLAEKVDQLVVGGGIANTFLKAAGNNIGKSLCEDELVPVAKSLMDKMNKRNATIPIAVDVVVGKKFAEDEAAVLKAANAVSDDDMIFDIGPESAQELVDIIMKAGTVVWNGPVGVFEFDQFGEGTRAIAKAIAETDAFTLAGGGDTIAAIQKYDIYDKVSYISTAGGAFLEFLEGKKLPAVEILELRAK.

Residues 21–23, arginine 36, 59–62, arginine 114, and arginine 147 each bind substrate; these read DLN and HLGR. ATP contacts are provided by residues lysine 198, glutamate 320, and 346-349; that span reads GGDT.

It belongs to the phosphoglycerate kinase family. Monomer.

The protein localises to the cytoplasm. It carries out the reaction (2R)-3-phosphoglycerate + ATP = (2R)-3-phospho-glyceroyl phosphate + ADP. Its pathway is carbohydrate degradation; glycolysis; pyruvate from D-glyceraldehyde 3-phosphate: step 2/5. This is Phosphoglycerate kinase from Nitrosomonas europaea (strain ATCC 19718 / CIP 103999 / KCTC 2705 / NBRC 14298).